The following is a 451-amino-acid chain: Probable NADH dehydrogenase (451 aa).

Position 41–71 (lysine 41–arginine 71) interacts with FAD. Leucine 199–glutamate 236 is an NAD(+) binding site.

It belongs to the NADH dehydrogenase family. Requires FAD as cofactor.

The catalysed reaction is a ubiquinone + NADH + 5 H(+)(in) = a ubiquinol + NAD(+) + 4 H(+)(out). The chain is Probable NADH dehydrogenase from Dictyostelium discoideum (Social amoeba).